The primary structure comprises 241 residues: Proteasome subunit alpha type-5 (241 aa).

Position 1 is an N-acetylmethionine (M1). Phosphoserine is present on S16. T55 is modified (phosphothreonine). 2 positions are modified to phosphoserine: S56 and S63. A glycan (O-linked (GlcNAc) serine) is linked at S198.

Belongs to the peptidase T1A family. In terms of assembly, the 26S proteasome consists of a 20S proteasome core and two 19S regulatory subunits. The 20S proteasome core is a barrel-shaped complex made of 28 subunits that are arranged in four stacked rings. The two outer rings are each formed by seven alpha subunits, and the two inner rings are formed by seven beta subunits. The proteolytic activity is exerted by three beta-subunits PSMB5, PSMB6 and PSMB7. PSMA5 interacts directly with the PSMG1-PSMG2 heterodimer which promotes 20S proteasome assembly.

The protein resides in the cytoplasm. It localises to the nucleus. In terms of biological role, component of the 20S core proteasome complex involved in the proteolytic degradation of most intracellular proteins. This complex plays numerous essential roles within the cell by associating with different regulatory particles. Associated with two 19S regulatory particles, forms the 26S proteasome and thus participates in the ATP-dependent degradation of ubiquitinated proteins. The 26S proteasome plays a key role in the maintenance of protein homeostasis by removing misfolded or damaged proteins that could impair cellular functions, and by removing proteins whose functions are no longer required. Associated with the PA200 or PA28, the 20S proteasome mediates ubiquitin-independent protein degradation. This type of proteolysis is required in several pathways including spermatogenesis (20S-PA200 complex) or generation of a subset of MHC class I-presented antigenic peptides (20S-PA28 complex). This Bos taurus (Bovine) protein is Proteasome subunit alpha type-5 (PSMA5).